A 247-amino-acid chain; its full sequence is 14-3-3 protein gamma (247 aa).

This sequence belongs to the 14-3-3 family. As to quaternary structure, homodimer, and heterodimer with other family members.

It localises to the cytoplasm. In terms of biological role, adapter protein implicated in the regulation of a large spectrum of both general and specialized signaling pathways. Binds to a large number of partners, usually by recognition of a phosphoserine or phosphothreonine motif. Binding generally results in the modulation of the activity of the binding partner. This Gallus gallus (Chicken) protein is 14-3-3 protein gamma (YWHAG).